We begin with the raw amino-acid sequence, 453 residues long: Ezy-1 protein (453 aa).

The N-terminal stretch at 1-28 (MQLSNSLRSARSAAASSGCALASRPVVA) is a signal peptide. 3 disordered regions span residues 167–187 (SDGG…DADG), 272–307 (TGKA…SSGG), and 412–453 (SAGD…SPNM). The segment covering 279 to 300 (AEGDDGEGEEEGEAQDVGEDAV) has biased composition (acidic residues). Positions 415 to 425 (DGHEPEPKRPE) are enriched in basic and acidic residues.

The polypeptide is Ezy-1 protein (Ezy-1) (Chlamydomonas reinhardtii (Chlamydomonas smithii)).